The following is a 380-amino-acid chain: F-box protein At4g18380 (380 aa).

Residues 22–70 (IDHFDNLPDSILLLIFNNIGDVKALGRCSVVSKRFHSLIPQVENVFVRV) form the F-box domain.

This chain is F-box protein At4g18380, found in Arabidopsis thaliana (Mouse-ear cress).